The following is a 1176-amino-acid chain: Histidine kinase 2 (1176 aa).

The Cytoplasmic segment spans residues 1–29 (MSITCELLNLTSKKAKKSSSSDKKWLKKP). A helical membrane pass occupies residues 30 to 50 (LFFLILCGSLVIVLVMFLRLG). The Extracellular portion of the chain corresponds to 51-174 (RSQKEETDSC…LEQGLSSYLR (124 aa)). The helical transmembrane segment at 175–195 (NAWWCLILGVLVCHKIYVSHS) threads the bilayer. Residues 196–232 (KARGERKEKVHLQEALAPKKQQQRAQTSSRGAGRWRK) lie on the Cytoplasmic side of the membrane. The chain crosses the membrane as a helical span at residues 233–253 (NILLLGILGGVSFSVWWFWDT). Residues 254–536 (NEEIIMKRRE…CRFKHKLPIP (283 aa)) lie on the Extracellular side of the membrane. In terms of domain architecture, CHASE spans 302-526 (IPSAIDQRTF…GDPSRNHEMH (225 aa)). Residues 537–557 (WTAITPSILVLVITFLVGYIL) form a helical membrane-spanning segment. The Cytoplasmic portion of the chain corresponds to 558 to 1176 (YEAINRIATV…TAVARFFEPC (619 aa)). The Histidine kinase domain maps to 594–867 (TVSHEIRTPM…TFSFTGVFGK (274 aa)). The residue at position 597 (His-597) is a Phosphohistidine; by autocatalysis. Response regulatory domains are found at residues 891 to 1013 (RALV…QETL) and 1036 to 1173 (QILV…ARFF). A 4-aspartylphosphate mark is found at Asp-942 and Asp-1086.

As to quaternary structure, self-interacts. Interacts with AHK3, AHP1, AHP2, AHP3, AHP5, ATAF2, AT2S3, BETAA-AD, CYP20-2, DRP1A, HIR1, HIR2, PI4KB1, PI4KG5 and At4g12060. Post-translationally, autophosphorylated predominantly on His residues. Activation probably requires a transfer of a phosphate group between a His in the transmitter domain and an Asp of the receiver domain. In terms of tissue distribution, expressed in roots, leaves and flowers, mostly in the vascular tissues. Present in seedlings.

Its subcellular location is the endoplasmic reticulum membrane. It carries out the reaction ATP + protein L-histidine = ADP + protein N-phospho-L-histidine.. With respect to regulation, activated by cytokinins to initiate phosphorelay signaling. In terms of biological role, cytokinins (CK) receptor related to bacterial two-component regulators. Functions as a histidine kinase and transmits the stress signal to a downstream MAPK cascade. This protein undergoes an ATP-dependent autophosphorylation at a conserved histidine residue in the kinase core, and a phosphoryl group is then transferred to a conserved aspartate residue in the receiver domain. In the presence of cytokinin, feeds phosphate to phosphorelay-integrating histidine phosphotransfer protein (HPt) and activates subsequent cascade. Involved in meristems establishment in seedlings. Redundant negative regulator of drought and salt stress responses and abscisic acid (ABA) signaling. Together with AHK3, plays a negative regulatory role in cold stress signaling via inhibition of ABA response, occurring independently of the cold acclimation pathway. Redundant positive regulator of cytokinin signaling that regulates many developmental processes including seed germination, cell division, seed size, chlorophyll retention during leaf senescence, root repression and shoot promotion. Involved in alkamides (e.g. N-isobutyl decanamide) and N-acylethanolamides (NAE) signaling that control meristematic activity and differentiation processes during plant development. Contributes to vascular bundle formation and secondary growth in a cytokinin-dependent manner, probably by promoting the maintenance of mitotic activity and/or identity of procambial cells. Together with AHK4, required for growth and reproduction promotion stimulated by the endophytic fungus Piriformospora indica in a trans-zeatin-dependent manner. Required by the cytokinin-dependent flower development regulation pathway. This chain is Histidine kinase 2 (AHK2), found in Arabidopsis thaliana (Mouse-ear cress).